Here is a 574-residue protein sequence, read N- to C-terminus: Glycine--tRNA ligase (574 aa).

Positions 96 and 162 each coordinate substrate. Residues 194 to 196 (RNE), 204 to 209 (IRLREF), 327 to 328 (EC), and 450 to 453 (GIDR) contribute to the ATP site. Residue 209–213 (FTQAE) participates in substrate binding. Position 446 to 450 (446 to 450 (EPSYG)) interacts with substrate.

This sequence belongs to the class-II aminoacyl-tRNA synthetase family.

The protein localises to the cytoplasm. The enzyme catalyses tRNA(Gly) + glycine + ATP = glycyl-tRNA(Gly) + AMP + diphosphate. Functionally, catalyzes the attachment of glycine to tRNA(Gly). The sequence is that of Glycine--tRNA ligase from Methanococcus maripaludis (strain DSM 14266 / JCM 13030 / NBRC 101832 / S2 / LL).